The chain runs to 27 residues: Pregnancy-associated glycoprotein 55 (27 aa).

This sequence belongs to the peptidase A1 family. Glycosylated. As to expression, placenta.

The chain is Pregnancy-associated glycoprotein 55 (PAG55) from Capra hircus (Goat).